An 842-amino-acid polypeptide reads, in one-letter code: Glycogen phosphorylase, muscle form (842 aa).

Ser-2 bears the N-acetylserine mark. Position 15 is a phosphoserine; by PHK; in form phosphorylase A (Ser-15). At Ser-26 the chain carries Phosphoserine. Asp-43 and Tyr-76 together coordinate AMP. A phosphotyrosine mark is found at Tyr-204 and Tyr-227. 310–319 (RRFKSSKFGC) provides a ligand contact to AMP. Phosphoserine is present on Ser-430. Phosphotyrosine is present on Tyr-473. Ser-514 carries the post-translational modification Phosphoserine. Lys-681 bears the N6-(pyridoxal phosphate)lysine mark. 2 positions are modified to phosphoserine: Ser-747 and Ser-748.

It belongs to the glycogen phosphorylase family. As to quaternary structure, homodimer. Homotetramer; to form the enzymatically active phosphorylase A. Pyridoxal 5'-phosphate is required as a cofactor. Phosphorylation of Ser-15 converts phosphorylase B (unphosphorylated) to phosphorylase A.

The enzyme catalyses [(1-&gt;4)-alpha-D-glucosyl](n) + phosphate = [(1-&gt;4)-alpha-D-glucosyl](n-1) + alpha-D-glucose 1-phosphate. Allosterically regulated through the non-covalent binding of metabolites, being activated by AMP and inhibited by ATP, ADP, and glucose-6-phosphate. The activity is also controlled by post-translational modifications including phosphorylation. Functionally, allosteric enzyme that catalyzes the rate-limiting step in glycogen catabolism, the phosphorolytic cleavage of glycogen to produce glucose-1-phosphate, and plays a central role in maintaining cellular and organismal glucose homeostasis. The polypeptide is Glycogen phosphorylase, muscle form (Rattus norvegicus (Rat)).